The sequence spans 347 residues: tRNA dimethylallyltransferase (347 aa).

Residue 20–27 (GPTASGKT) coordinates ATP. Residue 22-27 (TASGKT) participates in substrate binding. Interaction with substrate tRNA stretches follow at residues 45 to 48 (DSAM), 169 to 173 (QRLMR), and 275 to 280 (RCVGYR).

The protein belongs to the IPP transferase family. In terms of assembly, monomer. The cofactor is Mg(2+).

It catalyses the reaction adenosine(37) in tRNA + dimethylallyl diphosphate = N(6)-dimethylallyladenosine(37) in tRNA + diphosphate. Its function is as follows. Catalyzes the transfer of a dimethylallyl group onto the adenine at position 37 in tRNAs that read codons beginning with uridine, leading to the formation of N6-(dimethylallyl)adenosine (i(6)A). The sequence is that of tRNA dimethylallyltransferase from Marinobacter nauticus (strain ATCC 700491 / DSM 11845 / VT8) (Marinobacter aquaeolei).